The primary structure comprises 346 residues: Heat-inducible transcription repressor HrcA (346 aa).

The protein belongs to the HrcA family.

Its function is as follows. Negative regulator of class I heat shock genes (grpE-dnaK-dnaJ and groELS operons). Prevents heat-shock induction of these operons. The polypeptide is Heat-inducible transcription repressor HrcA (Erythrobacter litoralis (strain HTCC2594)).